Reading from the N-terminus, the 200-residue chain is Nucleoside triphosphate pyrophosphatase (200 aa).

Residue D79 is the Proton acceptor of the active site.

The protein belongs to the Maf family. The cofactor is a divalent metal cation.

The protein localises to the cytoplasm. It catalyses the reaction a ribonucleoside 5'-triphosphate + H2O = a ribonucleoside 5'-phosphate + diphosphate + H(+). It carries out the reaction a 2'-deoxyribonucleoside 5'-triphosphate + H2O = a 2'-deoxyribonucleoside 5'-phosphate + diphosphate + H(+). Nucleoside triphosphate pyrophosphatase. May have a dual role in cell division arrest and in preventing the incorporation of modified nucleotides into cellular nucleic acids. The polypeptide is Nucleoside triphosphate pyrophosphatase (Legionella pneumophila subsp. pneumophila (strain Philadelphia 1 / ATCC 33152 / DSM 7513)).